The sequence spans 322 residues: Ribose-phosphate pyrophosphokinase 1 (322 aa).

Residues 39–41 (DGE) and 98–99 (RQ) contribute to the ATP site. Residues His-132 and Asp-173 each coordinate Mg(2+). Lys-196 is a catalytic residue. Residues Arg-198, Asp-224, and 228-232 (DTAGT) contribute to the D-ribose 5-phosphate site.

It belongs to the ribose-phosphate pyrophosphokinase family. Class I subfamily. Homohexamer. Mg(2+) is required as a cofactor.

The protein localises to the cytoplasm. It carries out the reaction D-ribose 5-phosphate + ATP = 5-phospho-alpha-D-ribose 1-diphosphate + AMP + H(+). Its pathway is metabolic intermediate biosynthesis; 5-phospho-alpha-D-ribose 1-diphosphate biosynthesis; 5-phospho-alpha-D-ribose 1-diphosphate from D-ribose 5-phosphate (route I): step 1/1. Its function is as follows. Involved in the biosynthesis of the central metabolite phospho-alpha-D-ribosyl-1-pyrophosphate (PRPP) via the transfer of pyrophosphoryl group from ATP to 1-hydroxyl of ribose-5-phosphate (Rib-5-P). The sequence is that of Ribose-phosphate pyrophosphokinase 1 from Streptococcus agalactiae serotype III (strain NEM316).